Here is a 416-residue protein sequence, read N- to C-terminus: MKGILLLFLKLVVLFVYLCSSVLSECPALYRRYSKEHTFCKTKNQKCNIKRWGVSQDDRNTIINLHNKVRNNIALGQDQSGRLPAAGDMLEMEWDDELAQIAQKLADQCVFKHDCDDCRKVENFDVGQNIFTTTITAVEIPDPFWVDAIRSWYNEIYRFTRDFIKPFTSDHATGHFTQMVWSKTWRVGCGYVLYEKRKDSWTQLYVCNYGPAGNLDDSELYKVDKPCEKCPSNTCCGSHCKKKKSTSYLGLCDVLNGSGPDFDETDFSNYIFNCDFKPESSSDCNNKVEGSNKWQTRQIISDVYKTVVLNGGENTVLKFTSNIQSKDGFCLTVSFRKGPNIAGTNNVGEFDVQLERKGAKPLNFRLDSDGNQFLPYSMGIPMNHPMQINIKFSVPKGAPAQYLDISYIRARPGLCN.

The N-terminal stretch at 1–24 (MKGILLLFLKLVVLFVYLCSSVLS) is a signal peptide. The region spanning 57-217 (DDRNTIINLH…NYGPAGNLDD (161 aa)) is the SCP domain. Arginine 82 carries the post-translational modification Arginine amide; in Cryptide Pep-4.

The protein belongs to the CRISP family. Venom allergen 5-like subfamily. In terms of processing, contains 9 disulfide bonds. In terms of tissue distribution, expressed by the venom gland.

The protein localises to the secreted. In terms of biological role, presents weak lactate dehydrogenase (LDH) release from mast cells. Does not induce hemolytic activity, mast cell degranulation, and antimicrobial effects. In vivo, injection into mice causes moderate edema formation, but induces very weak or no change in nociceptive sensibility. It also causes an alteration in rearing (standing on hind limbs), but does not impact locomotion. This Tityus serrulatus (Brazilian scorpion) protein is Venom allergen 5.